A 404-amino-acid chain; its full sequence is Tyrosine--tRNA ligase (404 aa).

The short motif at 45–54 is the 'HIGH' region element; that stretch reads PTAPDLHLGH. The 'KMSKS' region signature appears at 229–233; the sequence is KMSKS. K232 provides a ligand contact to ATP. The 61-residue stretch at 342 to 402 folds into the S4 RNA-binding domain; the sequence is IFIASIVRLA…GKKAIAQVTF (61 aa).

The protein belongs to the class-I aminoacyl-tRNA synthetase family. TyrS type 2 subfamily. As to quaternary structure, homodimer.

It is found in the cytoplasm. It carries out the reaction tRNA(Tyr) + L-tyrosine + ATP = L-tyrosyl-tRNA(Tyr) + AMP + diphosphate + H(+). Catalyzes the attachment of tyrosine to tRNA(Tyr) in a two-step reaction: tyrosine is first activated by ATP to form Tyr-AMP and then transferred to the acceptor end of tRNA(Tyr). The chain is Tyrosine--tRNA ligase from Acinetobacter baylyi (strain ATCC 33305 / BD413 / ADP1).